A 613-amino-acid polypeptide reads, in one-letter code: Apoptosis-inducing factor 1, mitochondrial (613 aa).

2 short sequence motifs (mitochondrial localization signal) span residues 1–31 (MFRC…PRQR) and 63–89 (KIDN…KTMK). The N-terminal 54 residues, 1–54 (MFRCGGLAAGALKQKLVPLVRTVCVRSPRQRNRLPGNLFQRWHVPLELQMTRQM), are a transit peptide targeting the mitochondrion. A propeptide spans 55-101 (ASSGASGGKIDNSVLVLIVGLSTVGAGAYAYKTMKEDEKRYNERISG) (removed in mature form). The disordered stretch occupies residues 100–127 (SGLGLTPEQKQKKAALSASEGEEVPQDK). Thr105 is modified (phosphothreonine). Lys109 is modified (N6-succinyllysine). Residues Ser116 and Ser118 each carry the phosphoserine modification. Residues 134-483 (FLLIGGGTAA…KPYWHQSMFW (350 aa)) form an FAD-dependent oxidoreductase region. Residues 138-142 (GGGTA), 164-165 (ED), Arg172, and Lys177 each bind FAD. Trp196 contributes to the NAD(+) binding site. Val233 lines the FAD pocket. Lys255 participates in a covalent cross-link: Glycyl lysine isopeptide (Lys-Gly) (interchain with G-Cter in ubiquitin). Ser268 bears the Phosphoserine mark. Arg285 lines the FAD pocket. Ser292 is subject to Phosphoserine. Residues 308–311 (GGFL), Glu336, and Lys342 each bind NAD(+). At Ser371 the chain carries Phosphoserine. Lys388 carries the N6-acetyllysine modification. Gly399 is an NAD(+) binding site. Residue Asp438 coordinates FAD. The Nuclear localization signal motif lies at 446–451 (KLGRRR). Residues 453–454 (EH), Trp483, and Glu493 contribute to the NAD(+) site. Residues 454-455 (HH) and Trp483 each bind FAD. A compositionally biased stretch (polar residues) spans 513 to 529 (AQDNPKSATEQSGTGIR). The disordered stretch occupies residues 513–554 (AQDNPKSATEQSGTGIRSESETESEASEITIPPSTPAVPQAP). At Thr521 the chain carries Phosphothreonine. Ser524 and Ser530 each carry phosphoserine. Asn583 is an NAD(+) binding site. An N6-acetyllysine modification is found at Lys593.

Belongs to the FAD-dependent oxidoreductase family. Monomer (oxidized form). Homodimer (reduced form). Upon reduction with NADH, undergoes dimerization and forms tight, long-lived FADH2-NAD charge transfer complexes (CTC) resistant to oxidation. Also dimerizes with isoform 3 preventing its release from mitochondria. Interacts with XIAP/BIRC4. Interacts (via N-terminus) with EIF3G (via C-terminus). Interacts with PRELID1. Interacts with CHCHD4; the interaction increases in presence of NADH. Interacts with processed form of PARP1 (Poly [ADP-ribose] polymerase 1, processed C-terminus); interaction is mediated with poly-ADP-ribose chains attached to PARP1, promoting translocation into the nucleus. It depends on FAD as a cofactor. Under normal conditions, a 54-residue N-terminal segment is first proteolytically removed during or just after translocation into the mitochondrial intermembrane space (IMS) by the mitochondrial processing peptidase (MPP) to form the inner-membrane-anchored mature form (AIFmit). During apoptosis, it is further proteolytically processed at amino-acid position 101 leading to the generation of the mature form, which is confined to the mitochondrial IMS in a soluble form (AIFsol). AIFsol is released to the cytoplasm in response to specific death signals, and translocated to the nucleus, where it induces nuclear apoptosis in a caspase-independent manner. Post-translationally, ubiquitination by XIAP/BIRC4 does not lead to proteasomal degradation. Ubiquitination at Lys-255 by XIAP/BIRC4 blocks its ability to bind DNA and induce chromatin degradation, thereby inhibiting its ability to induce cell death. In terms of tissue distribution, expressed in all tested tissues. Detected in muscle and skin fibroblasts (at protein level). Expressed in osteoblasts (at protein level). As to expression, brain specific. Expressed in all tested tissues except brain. In terms of tissue distribution, isoform 5 is frequently down-regulated in human cancers.

The protein resides in the mitochondrion intermembrane space. It is found in the mitochondrion inner membrane. It localises to the cytoplasm. Its subcellular location is the nucleus. The protein localises to the perinuclear region. The protein resides in the mitochondrion. It is found in the cytosol. It catalyses the reaction A + NADH + H(+) = AH2 + NAD(+). Functions both as NADH oxidoreductase and as regulator of apoptosis. In response to apoptotic stimuli, it is released from the mitochondrion intermembrane space into the cytosol and to the nucleus, where it functions as a proapoptotic factor in a caspase-independent pathway. Release into the cytoplasm is mediated upon binding to poly-ADP-ribose chains. The soluble form (AIFsol) found in the nucleus induces 'parthanatos' i.e. caspase-independent fragmentation of chromosomal DNA. Binds to DNA in a sequence-independent manner. Interacts with EIF3G, and thereby inhibits the EIF3 machinery and protein synthesis, and activates caspase-7 to amplify apoptosis. Plays a critical role in caspase-independent, pyknotic cell death in hydrogen peroxide-exposed cells. In contrast, participates in normal mitochondrial metabolism. Plays an important role in the regulation of respiratory chain biogenesis by interacting with CHCHD4 and controlling CHCHD4 mitochondrial import. In terms of biological role, has NADH oxidoreductase activity. Does not induce nuclear apoptosis. Functionally, pro-apoptotic isoform. The sequence is that of Apoptosis-inducing factor 1, mitochondrial from Homo sapiens (Human).